Here is a 754-residue protein sequence, read N- to C-terminus: MTAQTMTLGYARMGKRRELKKALEGFWSGALGSEALLATFWDLETQAWQTQLQAGIDHIAVGDQTLYDHVLDWATWLGLIPSRFRGLSGLDRYFAMARGREGLPALEMTKWFDTNYHYLVPEIEPEADPSPNFGDFLERVRRAQGILGERTSPVVLSPVTLLCLSQRSGDLRADLEKLLPLYRDLLQELKQLGIPEVQIHDPILVTSQGSGLREAVEMSYRQLATAGIPVHLVTYFDDLGETYPWVVQLPVAGISLDFTRGHTLDLVRTYGFPADQILGAGVVDARNVWKVQPETVLASLRELQGVAPNLRVQPSASLQFVPHDAALEAQLPEPLRNVLSFAEQKLAEVALLARALNGEDTAAQQAEIQQQWQSFAQFSPPNPQVRQALANLKLQDFERFLPYEQRLSRQVQLPPLPTTTIGSFPQTPEVRQWRAKYKRGEVSQAEYEAAIDAEIAKCIRIQEEIGLDVLVHGEFERTDMVEYFAQKLEGFAFTEHGWVQSYGSRCVRPPILYGDVVRPQPMTVREFQVAQSHTQKPVKGMLTGPVTMLNWSFPRVDIPRREQALQIALALRAEVADLEAAGAVMVQVDEPALREGLPLKKERWPEYLSWAVDAFRLATGGAKPETQIHTHMCYSEFGDIIEHIERLDADVLSIENSRSNNKTLLQIAQAGYRHQVGNGVYDVHSPAVPSVEQILQQLRTGLAHLPVEQTWVNPDCGLKTRRWEEVIPALKNMVAAAHQLGEELLETQPEGLRE.

Residues 17 to 20 (RELK) and Lys-110 each bind 5-methyltetrahydropteroyltri-L-glutamate. L-homocysteine-binding positions include 421-423 (IGS) and Glu-474. L-methionine is bound by residues 421-423 (IGS) and Glu-474. Residues 505–506 (RC) and Trp-551 each bind 5-methyltetrahydropteroyltri-L-glutamate. Asp-589 is an L-homocysteine binding site. Asp-589 is an L-methionine binding site. Glu-595 is a binding site for 5-methyltetrahydropteroyltri-L-glutamate. 3 residues coordinate Zn(2+): His-631, Cys-633, and Glu-655. The Proton donor role is filled by His-684. Cys-716 serves as a coordination point for Zn(2+).

This sequence belongs to the vitamin-B12 independent methionine synthase family. Zn(2+) is required as a cofactor.

The enzyme catalyses 5-methyltetrahydropteroyltri-L-glutamate + L-homocysteine = tetrahydropteroyltri-L-glutamate + L-methionine. Its pathway is amino-acid biosynthesis; L-methionine biosynthesis via de novo pathway; L-methionine from L-homocysteine (MetE route): step 1/1. Catalyzes the transfer of a methyl group from 5-methyltetrahydrofolate to homocysteine resulting in methionine formation. This Synechococcus sp. (strain JA-2-3B'a(2-13)) (Cyanobacteria bacterium Yellowstone B-Prime) protein is 5-methyltetrahydropteroyltriglutamate--homocysteine methyltransferase.